The sequence spans 393 residues: Yellow-related salivary protein SP03B (393 aa).

Positions 1–18 (MKIFLCLIAVVFLQGVVG) are cleaved as a signal peptide. An N-linked (GlcNAc...) asparagine glycan is attached at asparagine 29.

This sequence belongs to the major royal jelly protein family. Female salivary gland (at protein level).

The protein resides in the secreted. Probably modulates blood feeding of sand flies on vertebrate species by binding and sequestering different mediators involved in the host response. Binds biogenic amines. Binds serotonin with high affinity. Poorly binds histamine. Does not bind dopamine, noradrenaline, adrenaline and octopamine. The chain is Yellow-related salivary protein SP03B from Phlebotomus perniciosus (Phlebotomine sand fly).